The primary structure comprises 106 residues: Iron-sulfur cluster assembly protein CyaY (106 aa).

Belongs to the frataxin family.

Involved in iron-sulfur (Fe-S) cluster assembly. May act as a regulator of Fe-S biogenesis. The chain is Iron-sulfur cluster assembly protein CyaY from Shigella flexneri serotype 5b (strain 8401).